The following is a 117-amino-acid chain: Aspartate 1-decarboxylase (117 aa).

Ser25 (schiff-base intermediate with substrate; via pyruvic acid) is an active-site residue. Ser25 is subject to Pyruvic acid (Ser). Residue Thr57 coordinates substrate. Tyr58 functions as the Proton donor in the catalytic mechanism. Residue 72-74 coordinates substrate; it reads GAA.

This sequence belongs to the PanD family. Heterooctamer of four alpha and four beta subunits. The cofactor is pyruvate. In terms of processing, is synthesized initially as an inactive proenzyme, which is activated by self-cleavage at a specific serine bond to produce a beta-subunit with a hydroxyl group at its C-terminus and an alpha-subunit with a pyruvoyl group at its N-terminus.

The protein resides in the cytoplasm. It carries out the reaction L-aspartate + H(+) = beta-alanine + CO2. It participates in cofactor biosynthesis; (R)-pantothenate biosynthesis; beta-alanine from L-aspartate: step 1/1. Its function is as follows. Catalyzes the pyruvoyl-dependent decarboxylation of aspartate to produce beta-alanine. In Helicobacter pylori (strain ATCC 700392 / 26695) (Campylobacter pylori), this protein is Aspartate 1-decarboxylase.